The chain runs to 259 residues: 2-oxoglutaramate amidase (259 aa).

The region spanning 3–238 is the CN hydrolase domain; the sequence is WTISCLQFDI…EGIVRAEIDL (236 aa). Glu42 serves as the catalytic Proton acceptor. Catalysis depends on Lys111, which acts as the Proton donor. Cys145 serves as the catalytic Nucleophile.

Belongs to the carbon-nitrogen hydrolase superfamily. NIT1/NIT2 family.

The catalysed reaction is 2-oxoglutaramate + H2O = 2-oxoglutarate + NH4(+). Its function is as follows. Involved in the methylthioribose (MTR) recycling pathway. Probably catalyzes the conversion of 2-oxoglutaramate to 2-oxoglutarate. In Bacillus subtilis (strain 168), this protein is 2-oxoglutaramate amidase.